Reading from the N-terminus, the 131-residue chain is Small ribosomal subunit protein bS6 (131 aa).

The tract at residues 94–131 is disordered; that stretch reads DAVTEESQLAKNADEKRARKATTRRPDSNDDNDNHSDD. Positions 117–131 are enriched in basic and acidic residues; the sequence is RRPDSNDDNDNHSDD.

The protein belongs to the bacterial ribosomal protein bS6 family.

In terms of biological role, binds together with bS18 to 16S ribosomal RNA. The sequence is that of Small ribosomal subunit protein bS6 from Psychrobacter cryohalolentis (strain ATCC BAA-1226 / DSM 17306 / VKM B-2378 / K5).